The chain runs to 256 residues: 7-cyano-7-deazaguanine synthase (256 aa).

Residues 1–22 (MTDASADALTSPSNSGASQDTS) are disordered. Residues 8–22 (ALTSPSNSGASQDTS) show a composition bias toward polar residues. Residue 30–40 (LSGGLDSVTCL) participates in ATP binding. Zn(2+) contacts are provided by Cys-220, Cys-230, Cys-233, and Cys-236.

The protein belongs to the QueC family. It depends on Zn(2+) as a cofactor.

The enzyme catalyses 7-carboxy-7-deazaguanine + NH4(+) + ATP = 7-cyano-7-deazaguanine + ADP + phosphate + H2O + H(+). It functions in the pathway purine metabolism; 7-cyano-7-deazaguanine biosynthesis. Functionally, catalyzes the ATP-dependent conversion of 7-carboxy-7-deazaguanine (CDG) to 7-cyano-7-deazaguanine (preQ(0)). This Psychrobacter sp. (strain PRwf-1) protein is 7-cyano-7-deazaguanine synthase.